A 175-amino-acid chain; its full sequence is Ribosome maturation factor RimM (175 aa).

Residues 97-175 (EGEFYWHQLE…RMVVDWDPEF (79 aa)) enclose the PRC barrel domain.

It belongs to the RimM family. As to quaternary structure, binds ribosomal protein uS19.

It is found in the cytoplasm. Functionally, an accessory protein needed during the final step in the assembly of 30S ribosomal subunit, possibly for assembly of the head region. Essential for efficient processing of 16S rRNA. May be needed both before and after RbfA during the maturation of 16S rRNA. It has affinity for free ribosomal 30S subunits but not for 70S ribosomes. The polypeptide is Ribosome maturation factor RimM (Marinobacter nauticus (strain ATCC 700491 / DSM 11845 / VT8) (Marinobacter aquaeolei)).